Consider the following 344-residue polypeptide: uncharacterized protein (344 aa).

The first 28 residues, 1–28 (MNKKSLNIVATLGILLVLAFSGCVDQSA), serve as a signal peptide directing secretion.

Belongs to the bacterial solute-binding protein 1 family. WtpA subfamily.

This is an uncharacterized protein from Methanococcus maripaludis (strain C7 / ATCC BAA-1331).